Here is a 448-residue protein sequence, read N- to C-terminus: Cyclic dof factor 3 (448 aa).

The disordered stretch occupies residues 26–108 (AVTVEDDEED…DGKTLKKPTK (83 aa)). The span at 29-39 (VEDDEEDDWSG) shows a compositional bias: acidic residues. Residues 40 to 54 (GDDKSPEKVTPELSD) are compositionally biased toward basic and acidic residues. The segment covering 55 to 69 (KNNNNCNDNSFNNSK) has biased composition (low complexity). A compositionally biased stretch (polar residues) spans 80 to 99 (STDQIESSDTPEDNQQTTPD). The segment at 110–164 (LPCPRCKSMETKFCYYNNYNINQPRHFCKACQRYWTAGGTMRNVPVGAGRRKNKS) adopts a Dof-type zinc-finger fold. Residues Cys-112, Cys-115, Cys-137, and Cys-140 each contribute to the Zn(2+) site. 2 disordered regions span residues 243-269 (NGDDCSSGSSVTTSNNHSVDESRAQSG) and 332-370 (SSSPISQKCSNTNSPTLGKHPRDEGSSKKDNETERKQKA). 2 stretches are compositionally biased toward polar residues: residues 246-259 (DCSSGSSVTTSNNH) and 332-347 (SSSPISQKCSNTNSPT). Positions 351–368 (HPRDEGSSKKDNETERKQ) are enriched in basic and acidic residues.

Interacts with ADO2 (via kelch repeats) and ADO3 (via kelch repeats). In terms of tissue distribution, expressed in the vasculature of cotyledons and hypocotyls, leaves and roots.

It localises to the nucleus. Its function is as follows. Transcription factor that binds specifically to a 5'-AA[AG]G-3' consensus core sequence. Regulates a photoperiodic flowering response. Transcriptional repressor of 'CONSTANS' expression. The sequence is that of Cyclic dof factor 3 (CDF3) from Arabidopsis thaliana (Mouse-ear cress).